The following is a 452-amino-acid chain: Keratin, type II cytoskeletal 80 (452 aa).

The segment at 1–82 (MACRSCVVGF…DPAVQQLKNQ (82 aa)) is head. Serine 45 is modified (phosphoserine). The tract at residues 82 to 118 (QEKEEMKALNDKFASLIGKVQALEQRNQLLETRWSFL) is coil 1A. The region spanning 83-394 (EKEEMKALND…KLVEGEEGRM (312 aa)) is the IF rod domain. The segment at 119–135 (QGQDSAIFDLGHLYEEY) is linker 1. Positions 136–227 (QGRLQEELRK…TIYEQELKDL (92 aa)) are coil 1B. Residues 228-251 (AAQVKDVSVTVGMDSRCHIDLSGI) form a linker 12 region. Residues 252 to 390 (VEEVKAQYDA…ATYRKLVEGE (139 aa)) are coil 2. Residues 391 to 452 (EGRMDSPSAT…YFSQESEVSE (62 aa)) form a tail region. Serine 396 is subject to Phosphoserine. The tract at residues 412–434 (AASRSGLSKAPSRKKKGSKGPVI) is disordered.

The protein belongs to the intermediate filament family. As to quaternary structure, heterotetramer of two type I and two type II keratins. In terms of tissue distribution, weakly expressed in tongue, but not skin or in any other tissues or organs examined.

In Homo sapiens (Human), this protein is Keratin, type II cytoskeletal 80 (KRT80).